We begin with the raw amino-acid sequence, 849 residues long: Autoinducer 1 sensor kinase/phosphatase LuxN (849 aa).

Helical transmembrane passes span 9-29, 41-61, 160-180, 196-216, 220-242, 251-275, and 283-301; these read IVYA…MWLF, VIFG…IAWI, SYFF…LVAM, IAGI…MTYF, FSLT…YALL, YIAY…AIFI, and WLIA…QLLY. The 216-residue stretch at 468-683 folds into the Histidine kinase domain; it reads SIAHEMRNPL…EFHLYFPVVP (216 aa). Position 471 is a phosphohistidine; by autocatalysis (His-471). Residues 722-835 form the Response regulatory domain; the sequence is TVLIVDDKEV…ALRHVLGNWL (114 aa). 4-aspartylphosphate is present on Asp-771.

It localises to the cell inner membrane. It catalyses the reaction ATP + protein L-histidine = ADP + protein N-phospho-L-histidine.. Its function is as follows. At low cell density, in the absence of AI-1 (autoinducer 1), LuxN has a kinase activity and autophosphorylates on His-471. The phosphoryl group is then transferred on Asp-771 of the response regulator domain. The phosphoryl group is transferred to LuxU, and ultimately to LuxO. At high cell density, in the presence of AI-1, the kinase activity is inactivated, and the response regulator domain has a phosphatase activity. LuxN phosphatase acts on itself. As LuxU could function to establish an equilibrium between the aspartyl-phosphate of LuxN and the aspartyl-phosphate of LuxO, LuxU transfers phosphate from LuxO to LuxN and finally phosphate is drained from the system. This Vibrio harveyi (Beneckea harveyi) protein is Autoinducer 1 sensor kinase/phosphatase LuxN (luxN).